A 216-amino-acid chain; its full sequence is GTP cyclohydrolase 1 2 (216 aa).

It belongs to the GTP cyclohydrolase I family. In terms of assembly, homomer.

It carries out the reaction GTP + H2O = 7,8-dihydroneopterin 3'-triphosphate + formate + H(+). It functions in the pathway cofactor biosynthesis; 7,8-dihydroneopterin triphosphate biosynthesis; 7,8-dihydroneopterin triphosphate from GTP: step 1/1. The sequence is that of GTP cyclohydrolase 1 2 (folE2) from Nostoc sp. (strain PCC 7120 / SAG 25.82 / UTEX 2576).